The primary structure comprises 278 residues: Shikimate dehydrogenase (NADP(+)) (278 aa).

Shikimate-binding positions include 19 to 21 and threonine 66; that span reads SRS. Lysine 70 functions as the Proton acceptor in the catalytic mechanism. Shikimate is bound by residues asparagine 91 and aspartate 106. NADP(+) is bound by residues 129–133 and phenylalanine 221; that span reads GAGGA. Tyrosine 223 contributes to the shikimate binding site. Glycine 242 provides a ligand contact to NADP(+).

This sequence belongs to the shikimate dehydrogenase family. As to quaternary structure, homodimer.

It catalyses the reaction shikimate + NADP(+) = 3-dehydroshikimate + NADPH + H(+). The protein operates within metabolic intermediate biosynthesis; chorismate biosynthesis; chorismate from D-erythrose 4-phosphate and phosphoenolpyruvate: step 4/7. Involved in the biosynthesis of the chorismate, which leads to the biosynthesis of aromatic amino acids. Catalyzes the reversible NADPH linked reduction of 3-dehydroshikimate (DHSA) to yield shikimate (SA). The sequence is that of Shikimate dehydrogenase (NADP(+)) from Anaeromyxobacter sp. (strain K).